Consider the following 177-residue polypeptide: Large ribosomal subunit protein uL6 (177 aa).

The protein belongs to the universal ribosomal protein uL6 family. In terms of assembly, part of the 50S ribosomal subunit.

Functionally, this protein binds to the 23S rRNA, and is important in its secondary structure. It is located near the subunit interface in the base of the L7/L12 stalk, and near the tRNA binding site of the peptidyltransferase center. In Rickettsia typhi (strain ATCC VR-144 / Wilmington), this protein is Large ribosomal subunit protein uL6.